A 225-amino-acid polypeptide reads, in one-letter code: Biosynthetic peptidoglycan transglycosylase (225 aa).

Residues 8-28 traverse the membrane as a helical segment; the sequence is VLLIFIGAILLIQLWIFSSLV.

It belongs to the glycosyltransferase 51 family.

It is found in the cell inner membrane. The catalysed reaction is [GlcNAc-(1-&gt;4)-Mur2Ac(oyl-L-Ala-gamma-D-Glu-L-Lys-D-Ala-D-Ala)](n)-di-trans,octa-cis-undecaprenyl diphosphate + beta-D-GlcNAc-(1-&gt;4)-Mur2Ac(oyl-L-Ala-gamma-D-Glu-L-Lys-D-Ala-D-Ala)-di-trans,octa-cis-undecaprenyl diphosphate = [GlcNAc-(1-&gt;4)-Mur2Ac(oyl-L-Ala-gamma-D-Glu-L-Lys-D-Ala-D-Ala)](n+1)-di-trans,octa-cis-undecaprenyl diphosphate + di-trans,octa-cis-undecaprenyl diphosphate + H(+). It participates in cell wall biogenesis; peptidoglycan biosynthesis. Its function is as follows. Peptidoglycan polymerase that catalyzes glycan chain elongation from lipid-linked precursors. In Acinetobacter baumannii (strain ACICU), this protein is Biosynthetic peptidoglycan transglycosylase.